Here is a 367-residue protein sequence, read N- to C-terminus: Aminomethyltransferase (367 aa).

The protein belongs to the GcvT family. The glycine cleavage system is composed of four proteins: P, T, L and H.

The catalysed reaction is N(6)-[(R)-S(8)-aminomethyldihydrolipoyl]-L-lysyl-[protein] + (6S)-5,6,7,8-tetrahydrofolate = N(6)-[(R)-dihydrolipoyl]-L-lysyl-[protein] + (6R)-5,10-methylene-5,6,7,8-tetrahydrofolate + NH4(+). Functionally, the glycine cleavage system catalyzes the degradation of glycine. The protein is Aminomethyltransferase of Mycolicibacterium paratuberculosis (strain ATCC BAA-968 / K-10) (Mycobacterium paratuberculosis).